The chain runs to 141 residues: Large-conductance mechanosensitive channel (141 aa).

The next 2 helical transmembrane spans lie at Val-16–Leu-36 and Gly-86–Val-106.

Belongs to the MscL family. As to quaternary structure, homopentamer.

The protein localises to the cell inner membrane. Functionally, channel that opens in response to stretch forces in the membrane lipid bilayer. May participate in the regulation of osmotic pressure changes within the cell. In Ralstonia nicotianae (strain ATCC BAA-1114 / GMI1000) (Ralstonia solanacearum), this protein is Large-conductance mechanosensitive channel.